A 156-amino-acid chain; its full sequence is Arginine repressor (156 aa).

The protein belongs to the ArgR family.

Its subcellular location is the cytoplasm. It participates in amino-acid biosynthesis; L-arginine biosynthesis [regulation]. Regulates arginine biosynthesis genes. This Shewanella putrefaciens (strain CN-32 / ATCC BAA-453) protein is Arginine repressor.